The chain runs to 238 residues: NAD(P)H-quinone oxidoreductase subunit K 1 (238 aa).

[4Fe-4S] cluster-binding residues include Cys54, Cys55, Cys119, and Cys150.

It belongs to the complex I 20 kDa subunit family. In terms of assembly, NDH-1 can be composed of about 15 different subunits; different subcomplexes with different compositions have been identified which probably have different functions. It depends on [4Fe-4S] cluster as a cofactor.

It localises to the cellular thylakoid membrane. It carries out the reaction a plastoquinone + NADH + (n+1) H(+)(in) = a plastoquinol + NAD(+) + n H(+)(out). It catalyses the reaction a plastoquinone + NADPH + (n+1) H(+)(in) = a plastoquinol + NADP(+) + n H(+)(out). NDH-1 shuttles electrons from an unknown electron donor, via FMN and iron-sulfur (Fe-S) centers, to quinones in the respiratory and/or the photosynthetic chain. The immediate electron acceptor for the enzyme in this species is believed to be plastoquinone. Couples the redox reaction to proton translocation, and thus conserves the redox energy in a proton gradient. Cyanobacterial NDH-1 also plays a role in inorganic carbon-concentration. The polypeptide is NAD(P)H-quinone oxidoreductase subunit K 1 (Cyanothece sp. (strain PCC 7425 / ATCC 29141)).